Reading from the N-terminus, the 516-residue chain is uncharacterized protein (516 aa).

Ser-21 bears the Phosphoserine mark. The interval 46 to 74 (DLQSSMEDSNKANGNGEETTDGAEGVLQT) is disordered. The segment covering 47 to 62 (LQSSMEDSNKANGNGE) has biased composition (polar residues). 6 WD repeats span residues 182 to 227 (TFPL…AVYP), 252 to 292 (YHTD…CVKS), 295 to 335 (YHSD…APSS), 337 to 377 (QVTS…KSVW), 381 to 421 (AHDG…PKMV), and 426 to 468 (LDVG…GVRK). Basic and acidic residues predominate over residues 482-493 (ERIVQLEDRGAG). The disordered stretch occupies residues 482–516 (ERIVQLEDRGAGEDSSDDDDYEDIEDDDDQDAEMS). The span at 495–516 (DSSDDDDYEDIEDDDDQDAEMS) shows a compositional bias: acidic residues. Ser-496 and Ser-497 each carry phosphoserine.

The protein localises to the cytoplasm. The protein resides in the nucleus. Its subcellular location is the nucleolus. This is an uncharacterized protein from Schizosaccharomyces pombe (strain 972 / ATCC 24843) (Fission yeast).